Here is a 361-residue protein sequence, read N- to C-terminus: Peptide chain release factor 1 (361 aa).

At Q237 the chain carries N5-methylglutamine. The tract at residues 286-306 (AKQDQEQAAKRKSLVGSGDRS) is disordered.

Belongs to the prokaryotic/mitochondrial release factor family. Methylated by PrmC. Methylation increases the termination efficiency of RF1.

Its subcellular location is the cytoplasm. Peptide chain release factor 1 directs the termination of translation in response to the peptide chain termination codons UAG and UAA. This Coxiella burnetii (strain CbuG_Q212) (Coxiella burnetii (strain Q212)) protein is Peptide chain release factor 1.